Here is a 291-residue protein sequence, read N- to C-terminus: GTP-binding protein RHO4 (291 aa).

The segment covering 14-31 has biased composition (polar residues); that stretch reads GNESNIVSQGSPSSSNLP. The interval 14 to 45 is disordered; sequence GNESNIVSQGSPSSSNLPESPGTLDEKNLPRL. Residue 79–86 participates in GTP binding; it reads GDGAVGKT. The Effector region motif lies at 101-109; it reads YIPTIFENY. Residues 127–131 and 185–188 each bind GTP; these read DTAGQ and LKSD. Positions 250–273 are disordered; it reads THTIKNPFKRNTTRSDIDSSTGDT. Phosphoserine is present on residues serine 264, serine 268, and serine 276. Position 288 is a cysteine methyl ester (cysteine 288). Cysteine 288 carries S-farnesyl cysteine lipidation. The propeptide at 289–291 is removed in mature form; the sequence is IIM.

This sequence belongs to the small GTPase superfamily. Rho family. In terms of assembly, interacts with BEM4.

The protein localises to the cell membrane. It catalyses the reaction GTP + H2O = GDP + phosphate + H(+). Its function is as follows. Plays an important role in cell growth. Required to keep the uninucleated state. May be involved in the organization of the cytoskeleton which affects microtubule functions. Most likely RHO3 and RHO4 of S.cerevisiae regulate partially overlapping but different pathways. The polypeptide is GTP-binding protein RHO4 (RHO4) (Saccharomyces cerevisiae (strain ATCC 204508 / S288c) (Baker's yeast)).